The following is a 377-amino-acid chain: Guanine nucleotide-binding protein subunit alpha-13 (377 aa).

S-palmitoyl cysteine attachment occurs at residues cysteine 14 and cysteine 18. Residues arginine 47–glutamine 377 form the G-alpha domain. The tract at residues lysine 50–threonine 63 is G1 motif. GTP-binding positions include glutamate 58 to threonine 63, serine 173, and leucine 197 to arginine 200. Residue serine 62 coordinates Mg(2+). The interval aspartate 195 to threonine 203 is G2 motif. Residue threonine 203 coordinates Mg(2+). Threonine 203 carries the phosphothreonine; by PKA modification. Residues phenylalanine 218–arginine 227 form a G3 motif region. Residues isoleucine 287–aspartate 294 are G4 motif. GTP contacts are provided by residues asparagine 291–aspartate 294 and alanine 349. The interval threonine 347–threonine 352 is G5 motif.

Belongs to the G-alpha family. G(12) subfamily. As to quaternary structure, g proteins are composed of 3 units; alpha, beta and gamma. The alpha chain contains the guanine nucleotide binding site. Interacts with UBXD5. Interacts with HAX1. Interacts (in GTP-bound form) with PPP5C (via TPR repeats); activates PPP5C phosphatase activity and translocates PPP5C to the cell membrane. Interacts with RGS22. Interacts with ARHGEF1. Interacts (in GTP-bound form) with ARHGEF11 (via RGS domain). Interacts (in GTP-bound form) with ARHGEF12 (via RGS domain). Interacts (in GTP-bound form) with CTNND1. Interacts with GAS2L2. Interacts with GPR35. Interacts with GPR174. Palmitoylation is critical for proper membrane localization and signaling. Post-translationally, phosphorylation on Thr-203 by PKA destabilizes the heterotrimer of alpha, beta and gamma, and inhibits Rho activation.

It is found in the membrane. It localises to the melanosome. The protein resides in the cytoplasm. Its subcellular location is the nucleus. Functionally, guanine nucleotide-binding proteins (G proteins) are involved as modulators or transducers in various transmembrane signaling systems. Activates effector molecule RhoA by binding and activating RhoGEFs (ARHGEF1/p115RhoGEF, ARHGEF11/PDZ-RhoGEF and ARHGEF12/LARG). GNA13-dependent Rho signaling subsequently regulates transcription factor AP-1 (activating protein-1). Promotes tumor cell invasion and metastasis by activating RhoA/ROCK signaling pathway. Inhibits CDH1-mediated cell adhesion in process independent from Rho activation. In lymphoid follicles, transmits P2RY8- and S1PR2-dependent signals that lead to inhibition of germinal center (GC) B cell growth and migration outside the GC niche. This chain is Guanine nucleotide-binding protein subunit alpha-13 (Gna13), found in Rattus norvegicus (Rat).